Here is a 168-residue protein sequence, read N- to C-terminus: Protein-export protein SecB (168 aa).

Belongs to the SecB family. In terms of assembly, homotetramer, a dimer of dimers. One homotetramer interacts with 1 SecA dimer.

It is found in the cytoplasm. Functionally, one of the proteins required for the normal export of preproteins out of the cell cytoplasm. It is a molecular chaperone that binds to a subset of precursor proteins, maintaining them in a translocation-competent state. It also specifically binds to its receptor SecA. This chain is Protein-export protein SecB, found in Saccharophagus degradans (strain 2-40 / ATCC 43961 / DSM 17024).